A 103-amino-acid polypeptide reads, in one-letter code: Probable protease inhibitor Egf0.4a (103 aa).

Residues 1-22 (MMSEKFALVLLVACIAFIGIET) form the signal peptide. Residues 35–87 (CGENEAYDSMRRGCEKRCDDHNPTFCFKFTTVCWCEKGYVRDKSDTCIKVEDC) enclose the TIL domain.

The protein belongs to the polydnaviridae EGF-like motif protein family.

In Microplitis demolitor (Parasitoid wasp), this protein is Probable protease inhibitor Egf0.4a (O4).